Consider the following 55-residue polypeptide: Sec-independent protein translocase protein TatA (55 aa).

The chain crosses the membrane as a helical span at residues 1–21 (MFGELGVPEVLFILGIALLIF).

The protein belongs to the TatA/E family. Forms a complex with TatC.

It localises to the cell inner membrane. Part of the twin-arginine translocation (Tat) system that transports large folded proteins containing a characteristic twin-arginine motif in their signal peptide across membranes. TatA could form the protein-conducting channel of the Tat system. This is Sec-independent protein translocase protein TatA from Koribacter versatilis (strain Ellin345).